The chain runs to 343 residues: Tetraacyldisaccharide 4'-kinase (343 aa).

Residue 53–60 coordinates ATP; that stretch reads TCGGAGKT.

This sequence belongs to the LpxK family.

It carries out the reaction a lipid A disaccharide + ATP = a lipid IVA + ADP + H(+). The protein operates within glycolipid biosynthesis; lipid IV(A) biosynthesis; lipid IV(A) from (3R)-3-hydroxytetradecanoyl-[acyl-carrier-protein] and UDP-N-acetyl-alpha-D-glucosamine: step 6/6. Transfers the gamma-phosphate of ATP to the 4'-position of a tetraacyldisaccharide 1-phosphate intermediate (termed DS-1-P) to form tetraacyldisaccharide 1,4'-bis-phosphate (lipid IVA). This chain is Tetraacyldisaccharide 4'-kinase, found in Bartonella quintana (strain Toulouse) (Rochalimaea quintana).